Consider the following 409-residue polypeptide: Dual-specificity RNA methyltransferase RlmN (409 aa).

The active-site Proton acceptor is the glutamate 126. A Radical SAM core domain is found at 132-373 (EEGRGTLCLS…NQAGYASPIR (242 aa)). An intrachain disulfide couples cysteine 139 to cysteine 384. Residues cysteine 146, cysteine 150, and cysteine 153 each contribute to the [4Fe-4S] cluster site. S-adenosyl-L-methionine-binding positions include 210-211 (GE), serine 242, 264-266 (SLH), and asparagine 341. The S-methylcysteine intermediate role is filled by cysteine 384.

This sequence belongs to the radical SAM superfamily. RlmN family. [4Fe-4S] cluster is required as a cofactor.

The protein localises to the cytoplasm. The catalysed reaction is adenosine(2503) in 23S rRNA + 2 reduced [2Fe-2S]-[ferredoxin] + 2 S-adenosyl-L-methionine = 2-methyladenosine(2503) in 23S rRNA + 5'-deoxyadenosine + L-methionine + 2 oxidized [2Fe-2S]-[ferredoxin] + S-adenosyl-L-homocysteine. The enzyme catalyses adenosine(37) in tRNA + 2 reduced [2Fe-2S]-[ferredoxin] + 2 S-adenosyl-L-methionine = 2-methyladenosine(37) in tRNA + 5'-deoxyadenosine + L-methionine + 2 oxidized [2Fe-2S]-[ferredoxin] + S-adenosyl-L-homocysteine. In terms of biological role, specifically methylates position 2 of adenine 2503 in 23S rRNA and position 2 of adenine 37 in tRNAs. m2A2503 modification seems to play a crucial role in the proofreading step occurring at the peptidyl transferase center and thus would serve to optimize ribosomal fidelity. The polypeptide is Dual-specificity RNA methyltransferase RlmN (Bartonella quintana (strain Toulouse) (Rochalimaea quintana)).